A 120-amino-acid chain; its full sequence is UPF0145 protein Mboo_1021 (120 aa).

This sequence belongs to the UPF0145 family.

The polypeptide is UPF0145 protein Mboo_1021 (Methanoregula boonei (strain DSM 21154 / JCM 14090 / 6A8)).